A 150-amino-acid chain; its full sequence is Urease subunit beta (150 aa).

Over residues 122-140 (GAVVGDSPAATPGTTGATG) the composition is skewed to low complexity. Positions 122–150 (GAVVGDSPAATPGTTGATGDLPGYLGEGS) are disordered.

It belongs to the urease beta subunit family. Heterotrimer of UreA (gamma), UreB (beta) and UreC (alpha) subunits. Three heterotrimers associate to form the active enzyme.

The protein localises to the cytoplasm. The catalysed reaction is urea + 2 H2O + H(+) = hydrogencarbonate + 2 NH4(+). It participates in nitrogen metabolism; urea degradation; CO(2) and NH(3) from urea (urease route): step 1/1. In Frankia alni (strain DSM 45986 / CECT 9034 / ACN14a), this protein is Urease subunit beta.